The chain runs to 161 residues: 6,7-dimethyl-8-ribityllumazine synthase (161 aa).

5-amino-6-(D-ribitylamino)uracil-binding positions include W26, 58–60, and 81–83; these read SFE and VVI. 86–87 contacts (2S)-2-hydroxy-3-oxobutyl phosphate; it reads GT. Catalysis depends on H89, which acts as the Proton donor. Residue F114 participates in 5-amino-6-(D-ribitylamino)uracil binding. R128 contacts (2S)-2-hydroxy-3-oxobutyl phosphate.

This sequence belongs to the DMRL synthase family.

The catalysed reaction is (2S)-2-hydroxy-3-oxobutyl phosphate + 5-amino-6-(D-ribitylamino)uracil = 6,7-dimethyl-8-(1-D-ribityl)lumazine + phosphate + 2 H2O + H(+). It functions in the pathway cofactor biosynthesis; riboflavin biosynthesis; riboflavin from 2-hydroxy-3-oxobutyl phosphate and 5-amino-6-(D-ribitylamino)uracil: step 1/2. Catalyzes the formation of 6,7-dimethyl-8-ribityllumazine by condensation of 5-amino-6-(D-ribitylamino)uracil with 3,4-dihydroxy-2-butanone 4-phosphate. This is the penultimate step in the biosynthesis of riboflavin. This Streptomyces coelicolor (strain ATCC BAA-471 / A3(2) / M145) protein is 6,7-dimethyl-8-ribityllumazine synthase.